A 188-amino-acid chain; its full sequence is Large ribosomal subunit protein uL5 (188 aa).

Belongs to the universal ribosomal protein uL5 family. As to quaternary structure, part of the 50S ribosomal subunit; part of the 5S rRNA/L5/L18/L25 subcomplex. Contacts the 5S rRNA and the P site tRNA. Forms a bridge to the 30S subunit in the 70S ribosome.

In terms of biological role, this is one of the proteins that bind and probably mediate the attachment of the 5S RNA into the large ribosomal subunit, where it forms part of the central protuberance. In the 70S ribosome it contacts protein S13 of the 30S subunit (bridge B1b), connecting the 2 subunits; this bridge is implicated in subunit movement. Contacts the P site tRNA; the 5S rRNA and some of its associated proteins might help stabilize positioning of ribosome-bound tRNAs. The protein is Large ribosomal subunit protein uL5 of Aquifex pyrophilus.